A 161-amino-acid polypeptide reads, in one-letter code: Large ribosomal subunit protein uL15 (161 aa).

The interval 1 to 44 (MKLSEIADNAGSRKKRMRVGRGIGSGKGKTAGRGGKGQTARSGV) is disordered. Gly residues predominate over residues 21-37 (RGIGSGKGKTAGRGGKG).

The protein belongs to the universal ribosomal protein uL15 family. Part of the 50S ribosomal subunit.

Binds to the 23S rRNA. The chain is Large ribosomal subunit protein uL15 from Rhodopseudomonas palustris (strain BisA53).